The sequence spans 171 residues: Photosystem I assembly protein Ycf3 (171 aa).

3 TPR repeats span residues 33–66 (AFSYYRYGMSAQSSGDYAEALENYYEALKLEEDP), 70–103 (SYILYNIGLIYGNNGDYSKSLDYYHQALDLNSRL), and 118–151 (GTKSSEKKEFEVAQNNFDKAASYWKKAIRLAPNN).

Belongs to the Ycf3 family.

It localises to the plastid. The protein resides in the chloroplast thylakoid membrane. Its function is as follows. Essential for the assembly of the photosystem I (PSI) complex. May act as a chaperone-like factor to guide the assembly of the PSI subunits. The polypeptide is Photosystem I assembly protein Ycf3 (Emiliania huxleyi (Coccolithophore)).